The chain runs to 158 residues: Endoribonuclease YbeY (158 aa).

Zn(2+) is bound by residues histidine 118, histidine 122, and histidine 128.

It belongs to the endoribonuclease YbeY family. It depends on Zn(2+) as a cofactor.

It localises to the cytoplasm. In terms of biological role, single strand-specific metallo-endoribonuclease involved in late-stage 70S ribosome quality control and in maturation of the 3' terminus of the 16S rRNA. The protein is Endoribonuclease YbeY of Alteromonas mediterranea (strain DSM 17117 / CIP 110805 / LMG 28347 / Deep ecotype).